The sequence spans 652 residues: Probable serine/threonine-protein kinase mkcD (652 aa).

3 disordered regions span residues Met-1–Lys-47, Asn-163–Val-198, and Gln-257–Pro-289. Residues Asn-182–Asp-191 show a composition bias toward gly residues. Residues Lys-231–Glu-275 adopt a coiled-coil conformation. Residues Gln-257–Gln-271 show a composition bias toward low complexity. The segment covering Ser-279–Pro-289 has biased composition (polar residues). A Protein kinase domain is found at Phe-369–Leu-626. ATP contacts are provided by residues Glu-375–Val-383 and Lys-403. The Proton acceptor role is filled by Asp-494.

Belongs to the protein kinase superfamily. STE Ser/Thr protein kinase family. STE20 subfamily. Mg(2+) is required as a cofactor.

It catalyses the reaction L-seryl-[protein] + ATP = O-phospho-L-seryl-[protein] + ADP + H(+). The catalysed reaction is L-threonyl-[protein] + ATP = O-phospho-L-threonyl-[protein] + ADP + H(+). The sequence is that of Probable serine/threonine-protein kinase mkcD from Dictyostelium discoideum (Social amoeba).